We begin with the raw amino-acid sequence, 445 residues long: Chromosomal replication initiator protein DnaA (445 aa).

The tract at residues 1 to 73 (MSPNSTLWQT…NELATKYSST (73 aa)) is domain I, interacts with DnaA modulators. Residues 73–102 (TPVRLKFVSQEEVIEEPVADRKLTIDYRQG) are domain II. A domain III, AAA+ region region spans residues 103-323 (NLNSTYTFDS…GALIRLISYA (221 aa)). The ATP site is built by G147, G149, K150, and T151. The domain IV, binds dsDNA stretch occupies residues 324–445 (QTFNLEITMN…KFAVDSIVKK (122 aa)).

It belongs to the DnaA family. Oligomerizes as a right-handed, spiral filament on DNA at oriC.

The protein localises to the cytoplasm. Plays an essential role in the initiation and regulation of chromosomal replication. ATP-DnaA binds to the origin of replication (oriC) to initiate formation of the DNA replication initiation complex once per cell cycle. Binds the DnaA box (a 9 base pair repeat at the origin) and separates the double-stranded (ds)DNA. Forms a right-handed helical filament on oriC DNA; dsDNA binds to the exterior of the filament while single-stranded (ss)DNA is stabiized in the filament's interior. The ATP-DnaA-oriC complex binds and stabilizes one strand of the AT-rich DNA unwinding element (DUE), permitting loading of DNA polymerase. After initiation quickly degrades to an ADP-DnaA complex that is not apt for DNA replication. Binds acidic phospholipids. The protein is Chromosomal replication initiator protein DnaA of Acholeplasma laidlawii.